The following is a 240-amino-acid chain: MVKLVLIRHGQSEWNVENRFTGWTDVDLSSKGLEEAREAGVMLKASGFSFDIAYTSVLRRAMRTLWITLEEMDLMWIPVYKTWKLNERHYGALQGLNKEETARKYGDEQVTLWRRSTNVRPPALTKDDERYEAAHPKYRDIKDYEFPLTEDLEDTEKRVVSYWNEEIAPNVKAGKQVIIAAHGNTIRALVKHLDQISDKDIENVNIPTGTPLVYELDNDLKPIGHYYLNREIETLEEKQV.

Substrate contacts are provided by residues 8–15 (RHGQSEWN), 21–22 (TG), arginine 60, 87–90 (ERHY), lysine 98, 114–115 (RR), and 183–184 (GN). Histidine 9 (tele-phosphohistidine intermediate) is an active-site residue. Glutamate 87 serves as the catalytic Proton donor/acceptor.

The protein belongs to the phosphoglycerate mutase family. BPG-dependent PGAM subfamily.

The enzyme catalyses (2R)-2-phosphoglycerate = (2R)-3-phosphoglycerate. The protein operates within carbohydrate degradation; glycolysis; pyruvate from D-glyceraldehyde 3-phosphate: step 3/5. In terms of biological role, catalyzes the interconversion of 2-phosphoglycerate and 3-phosphoglycerate. This chain is 2,3-bisphosphoglycerate-dependent phosphoglycerate mutase 2, found in Bacillus cereus (strain ATCC 10987 / NRS 248).